Here is a 438-residue protein sequence, read N- to C-terminus: GTPase Der (438 aa).

EngA-type G domains follow at residues 4 to 168 (PIVA…PKGY) and 177 to 352 (IRIA…TNYS). GTP-binding positions include 10 to 17 (GRPNVGKS), 57 to 61 (DTGGI), 120 to 123 (NKID), 183 to 190 (GKPNVGKS), 230 to 234 (DTAGL), and 295 to 298 (NKWD). The region spanning 353-437 (KRISTGVLND…GIKMEFRERK (85 aa)) is the KH-like domain.

It belongs to the TRAFAC class TrmE-Era-EngA-EngB-Septin-like GTPase superfamily. EngA (Der) GTPase family. As to quaternary structure, associates with the 50S ribosomal subunit.

Functionally, GTPase that plays an essential role in the late steps of ribosome biogenesis. The polypeptide is GTPase Der (Clostridium tetani (strain Massachusetts / E88)).